A 403-amino-acid polypeptide reads, in one-letter code: Acetate kinase (403 aa).

Residue asparagine 7 participates in Mg(2+) binding. Lysine 14 is an ATP binding site. Arginine 90 serves as a coordination point for substrate. The active-site Proton donor/acceptor is the aspartate 147. Residues 207 to 211, 283 to 285, and 331 to 335 contribute to the ATP site; these read HIGNG, DMR, and GVGEN. Glutamate 386 provides a ligand contact to Mg(2+).

It belongs to the acetokinase family. In terms of assembly, homodimer. It depends on Mg(2+) as a cofactor. Requires Mn(2+) as cofactor.

It is found in the cytoplasm. The catalysed reaction is acetate + ATP = acetyl phosphate + ADP. Its pathway is metabolic intermediate biosynthesis; acetyl-CoA biosynthesis; acetyl-CoA from acetate: step 1/2. Functionally, catalyzes the formation of acetyl phosphate from acetate and ATP. Can also catalyze the reverse reaction. The sequence is that of Acetate kinase from Thermotoga petrophila (strain ATCC BAA-488 / DSM 13995 / JCM 10881 / RKU-1).